The sequence spans 80 residues: Exodeoxyribonuclease 7 small subunit (80 aa).

This sequence belongs to the XseB family. Heterooligomer composed of large and small subunits.

Its subcellular location is the cytoplasm. It catalyses the reaction Exonucleolytic cleavage in either 5'- to 3'- or 3'- to 5'-direction to yield nucleoside 5'-phosphates.. Functionally, bidirectionally degrades single-stranded DNA into large acid-insoluble oligonucleotides, which are then degraded further into small acid-soluble oligonucleotides. The sequence is that of Exodeoxyribonuclease 7 small subunit from Lactobacillus helveticus (strain DPC 4571).